A 415-amino-acid polypeptide reads, in one-letter code: Histidine--tRNA ligase (415 aa).

The protein belongs to the class-II aminoacyl-tRNA synthetase family. In terms of assembly, homodimer.

The protein resides in the cytoplasm. The catalysed reaction is tRNA(His) + L-histidine + ATP = L-histidyl-tRNA(His) + AMP + diphosphate + H(+). In Rickettsia felis (strain ATCC VR-1525 / URRWXCal2) (Rickettsia azadi), this protein is Histidine--tRNA ligase.